A 695-amino-acid chain; its full sequence is Frizzled and smoothened-like protein O (695 aa).

The first 23 residues, 1-23 (MKKLNYLLIVSFIFILNLLISKS), serve as a signal peptide directing secretion. Over 24–233 (QVLIDVTAKC…KEYKTKFYSE (210 aa)) the chain is Extracellular. Positions 28–173 (DVTAKCELID…ANEEIQCSGP (146 aa)) constitute an FZ domain. 5 disulfides stabilise this stretch: Cys-33–Cys-96, Cys-42–Cys-89, Cys-80–Cys-125, Cys-114–Cys-170, and Cys-118–Cys-138. Asn-47 carries an N-linked (GlcNAc...) asparagine glycan. Residues Asn-137 and Asn-178 are each glycosylated (N-linked (GlcNAc...) asparagine). Residues 234 to 254 (AILFSFSTACSFYLIFTFGVF) traverse the membrane as a helical segment. Topologically, residues 255–262 (PNKYTNRN) are cytoplasmic. A helical membrane pass occupies residues 263-283 (WIIVYLGITAICLAISYAVQE). Topologically, residues 284–307 (ARYGGGDWRCTSDPGRYKSSEDGT) are extracellular. Residues 308-328 (CILGGFFFQIGGLGTILFLSL) traverse the membrane as a helical segment. Topologically, residues 329–343 (YSFDMFLTMNMMTNK) are cytoplasmic. The chain crosses the membrane as a helical span at residues 344 to 364 (YFIQTSVGMWALIIFYALLPI). Residues 365–387 (KHYESSIASAGCWLSNEDNMFWQ) lie on the Extracellular side of the membrane. A helical membrane pass occupies residues 388-408 (YFCFYVPSYVATFFLGVFIIT). At 409–435 (SIYKVFKMTVMFKSIKDKRILLLNIRS) the chain is on the cytoplasmic side. A helical membrane pass occupies residues 436-456 (IIFLIAIMFCVSFSTMYPLYV). At 457–500 (TYNGDDFSKSVEVYVTCLYANIPNGNEVCPQIVFPQFSLRYMNA) the chain is on the extracellular side. A helical membrane pass occupies residues 501–521 (ITMAIIGIVGLIGLGIDPHIL). The Cytoplasmic segment spans residues 522–695 (QIYRESIRFK…NIERINSDNV (174 aa)). Positions 545-556 (SPQPLKQGSTTD) are enriched in polar residues. A disordered region spans residues 545-695 (SPQPLKQGST…NIERINSDNV (151 aa)). Low complexity predominate over residues 593 to 608 (NLSASSESSNNLLNQS). A compositionally biased stretch (polar residues) spans 609 to 625 (TPGNLNINESISSIDTS). Positions 626-686 (NNNNNNNNNN…NNNNNNNNNN (61 aa)) are enriched in low complexity. Positions 653 to 691 (NNNNNNNNNNNNNNNNNNNNYSNNNNNNNNNNNNIERIN) form a coiled coil.

This sequence belongs to the G-protein coupled receptor Fz/Smo family.

Its subcellular location is the membrane. This Dictyostelium discoideum (Social amoeba) protein is Frizzled and smoothened-like protein O (fslO).